Here is a 533-residue protein sequence, read N- to C-terminus: tRNA(Ile)-lysidine synthase (533 aa).

27 to 32 (SGGSDS) contributes to the ATP binding site.

Belongs to the tRNA(Ile)-lysidine synthase family.

The protein resides in the cytoplasm. The catalysed reaction is cytidine(34) in tRNA(Ile2) + L-lysine + ATP = lysidine(34) in tRNA(Ile2) + AMP + diphosphate + H(+). In terms of biological role, ligates lysine onto the cytidine present at position 34 of the AUA codon-specific tRNA(Ile) that contains the anticodon CAU, in an ATP-dependent manner. Cytidine is converted to lysidine, thus changing the amino acid specificity of the tRNA from methionine to isoleucine. In Rickettsia peacockii (strain Rustic), this protein is tRNA(Ile)-lysidine synthase.